The chain runs to 80 residues: uncharacterized protein (80 aa).

Residues 12-32 (FKIIALILLIVLIINLSYKLF) traverse the membrane as a helical segment.

It localises to the membrane. This is an uncharacterized protein from Saccharomyces cerevisiae (strain ATCC 204508 / S288c) (Baker's yeast).